Reading from the N-terminus, the 465-residue chain is Alpha-2A adrenergic receptor (465 aa).

Topologically, residues 1–48 (MFRQEQPLAEGSFAPMGSLQPDAGNSSWNGTEAPGGGTRATPYSLQVT) are extracellular. Residues Asn25 and Asn29 are each glycosylated (N-linked (GlcNAc...) asparagine). The chain crosses the membrane as a helical span at residues 49-74 (LTLVCLAGLLMLFTVFGNVLVIIAVF). Over 75–85 (TSRALKAPQNL) the chain is Cytoplasmic. Residues 86–111 (FLVSLASADILVATLVIPFSLANEVM) form a helical membrane-spanning segment. At 112–121 (GYWYFGKVWC) the chain is on the extracellular side. Cys121 and Cys203 are disulfide-bonded. The helical transmembrane segment at 122–144 (EIYLALDVLFCTSSIVHLCAISL) threads the bilayer. The Cytoplasmic segment spans residues 145–164 (DRYWSITQAIEYNLKRTPRR). A helical membrane pass occupies residues 165–188 (IKAIIVTVWVISAVISFPPLISIE). Over 189–207 (KKGAGGGQQPAEPSCKIND) the chain is Extracellular. A helical membrane pass occupies residues 208–232 (QKWYVISSSIGSFFAPCLIMILVYV). At 233–389 (RIYQIAKRRT…RQNREKRFTF (157 aa)) the chain is on the cytoplasmic side. The interval 242–378 (TRVPPSRRGP…GGGAKASRWR (137 aa)) is disordered. Positions 313-330 (SSEHAERPPGPRRPDRGP) are enriched in basic and acidic residues. Ser346 bears the Phosphoserine mark. Residues 353–363 (GAAGPGASGSG) are compositionally biased toward gly residues. An Omega-N-methylarginine modification is found at Arg368. The chain crosses the membrane as a helical span at residues 390–414 (VLAVVIGVFVVCWFPFFFTYTLIAV). Topologically, residues 415 to 424 (GCPVPSQLFN) are extracellular. The chain crosses the membrane as a helical span at residues 425 to 445 (FFFWFGYCNSSLNPVIYTIFN). Over 446-465 (HDFRRAFKKILCRGDRKRIV) the chain is Cytoplasmic. The S-palmitoyl cysteine moiety is linked to residue Cys457.

This sequence belongs to the G-protein coupled receptor 1 family. Adrenergic receptor subfamily. ADRA2A sub-subfamily.

It localises to the cell membrane. Its function is as follows. Alpha-2 adrenergic receptors mediate the catecholamine-induced inhibition of adenylate cyclase through the action of G proteins. The polypeptide is Alpha-2A adrenergic receptor (Mus musculus (Mouse)).